We begin with the raw amino-acid sequence, 259 residues long: Ribosomal RNA small subunit methyltransferase A (259 aa).

Positions 13, 15, 40, 61, 85, and 105 each coordinate S-adenosyl-L-methionine.

This sequence belongs to the class I-like SAM-binding methyltransferase superfamily. rRNA adenine N(6)-methyltransferase family. RsmA subfamily.

It localises to the cytoplasm. The enzyme catalyses adenosine(1518)/adenosine(1519) in 16S rRNA + 4 S-adenosyl-L-methionine = N(6)-dimethyladenosine(1518)/N(6)-dimethyladenosine(1519) in 16S rRNA + 4 S-adenosyl-L-homocysteine + 4 H(+). Its function is as follows. Specifically dimethylates two adjacent adenosines (A1518 and A1519) in the loop of a conserved hairpin near the 3'-end of 16S rRNA in the 30S particle. May play a critical role in biogenesis of 30S subunits. The chain is Ribosomal RNA small subunit methyltransferase A from Mycoplasma genitalium (strain ATCC 33530 / DSM 19775 / NCTC 10195 / G37) (Mycoplasmoides genitalium).